The primary structure comprises 148 residues: Mediator of RNA polymerase II transcription subunit 31 (148 aa).

This sequence belongs to the Mediator complex subunit 31 family. As to quaternary structure, component of the Mediator complex.

It is found in the nucleus. Functionally, component of the Mediator complex, a coactivator involved in the regulated transcription of nearly all RNA polymerase II-dependent genes. Mediator functions as a bridge to convey information from gene-specific regulatory proteins to the basal RNA polymerase II transcription machinery. Mediator is recruited to promoters by direct interactions with regulatory proteins and serves as a scaffold for the assembly of a functional preinitiation complex with RNA polymerase II and the general transcription factors. The chain is Mediator of RNA polymerase II transcription subunit 31 from Taenia solium (Pork tapeworm).